A 100-amino-acid polypeptide reads, in one-letter code: Apolipoprotein C-II (100 aa).

The first 22 residues, Met-1–Gly-22, serve as a signal peptide directing secretion. Residues Ser-66–Met-74 are lipid binding. Positions Ser-78–Glu-100 are lipoprotein lipase cofactor.

It belongs to the apolipoprotein C2 family. Proapolipoprotein C-II is synthesized as a sialic acid containing glycoprotein which is subsequently desialylated prior to its proteolytic processing. In terms of processing, proapolipoprotein C-II, the major form found in plasma undergoes proteolytic cleavage of its N-terminal hexapeptide to generate the mature form apolipoprotein C-II, which occurs as the minor form in plasma.

It localises to the secreted. Functionally, component of chylomicrons, very low-density lipoproteins (VLDL), low-density lipoproteins (LDL), and high-density lipoproteins (HDL) in plasma. Plays an important role in lipoprotein metabolism as an activator of lipoprotein lipase. The sequence is that of Apolipoprotein C-II (Apoc2) from Neotoma lepida (Desert woodrat).